A 324-amino-acid polypeptide reads, in one-letter code: DNA primase small subunit PriS (324 aa).

Catalysis depends on residues Asp94, Asp96, and Asp274.

Belongs to the eukaryotic-type primase small subunit family. In terms of assembly, heterodimer of a small subunit (PriS) and a large subunit (PriL). It depends on Mg(2+) as a cofactor. Requires Mn(2+) as cofactor.

Functionally, catalytic subunit of DNA primase, an RNA polymerase that catalyzes the synthesis of short RNA molecules used as primers for DNA polymerase during DNA replication. The small subunit contains the primase catalytic core and has DNA synthesis activity on its own. Binding to the large subunit stabilizes and modulates the activity, increasing the rate of DNA synthesis while decreasing the length of the DNA fragments, and conferring RNA synthesis capability. The DNA polymerase activity may enable DNA primase to also catalyze primer extension after primer synthesis. May also play a role in DNA repair. The protein is DNA primase small subunit PriS of Methanobrevibacter smithii (strain ATCC 35061 / DSM 861 / OCM 144 / PS).